The following is a 403-amino-acid chain: Serine/threonine transporter SstT (403 aa).

9 helical membrane passes run 16–36 (QIVI…AIAL), 45–65 (FVSA…MASI), 79–99 (ILWL…VASM), 138–158 (ALLN…GVAL), 175–195 (GVTL…FGLV), 214–234 (LAVL…LIVF), 295–315 (MAGA…TLGI), 327–347 (MVAA…LLLI), and 353–373 (LFGI…IIGV).

Belongs to the dicarboxylate/amino acid:cation symporter (DAACS) (TC 2.A.23) family.

Its subcellular location is the cell inner membrane. The enzyme catalyses L-serine(in) + Na(+)(in) = L-serine(out) + Na(+)(out). The catalysed reaction is L-threonine(in) + Na(+)(in) = L-threonine(out) + Na(+)(out). Involved in the import of serine and threonine into the cell, with the concomitant import of sodium (symport system). The sequence is that of Serine/threonine transporter SstT from Pseudomonas putida (strain W619).